The following is a 180-amino-acid chain: Large ribosomal subunit protein uL5 (180 aa).

This sequence belongs to the universal ribosomal protein uL5 family. In terms of assembly, part of the 50S ribosomal subunit; part of the 5S rRNA/L5/L18/L25 subcomplex. Contacts the 5S rRNA and the P site tRNA. Forms a bridge to the 30S subunit in the 70S ribosome.

Its function is as follows. This is one of the proteins that bind and probably mediate the attachment of the 5S RNA into the large ribosomal subunit, where it forms part of the central protuberance. In the 70S ribosome it contacts protein S13 of the 30S subunit (bridge B1b), connecting the 2 subunits; this bridge is implicated in subunit movement. Contacts the P site tRNA; the 5S rRNA and some of its associated proteins might help stabilize positioning of ribosome-bound tRNAs. The polypeptide is Large ribosomal subunit protein uL5 (Anaeromyxobacter dehalogenans (strain 2CP-1 / ATCC BAA-258)).